The following is a 267-amino-acid chain: 5'-nucleotidase SurE (267 aa).

A divalent metal cation is bound by residues Asp9, Asp10, Ser41, and Asn95.

The protein belongs to the SurE nucleotidase family. Requires a divalent metal cation as cofactor.

The protein localises to the cytoplasm. The enzyme catalyses a ribonucleoside 5'-phosphate + H2O = a ribonucleoside + phosphate. Functionally, nucleotidase that shows phosphatase activity on nucleoside 5'-monophosphates. This is 5'-nucleotidase SurE from Aeropyrum pernix (strain ATCC 700893 / DSM 11879 / JCM 9820 / NBRC 100138 / K1).